Here is a 172-residue protein sequence, read N- to C-terminus: Shikimate kinase (172 aa).

8–15 (GARASGKT) contacts ATP.

It belongs to the shikimate kinase family.

The protein localises to the cytoplasm. It catalyses the reaction shikimate + ATP = 3-phosphoshikimate + ADP + H(+). It functions in the pathway metabolic intermediate biosynthesis; chorismate biosynthesis; chorismate from D-erythrose 4-phosphate and phosphoenolpyruvate: step 5/7. This Oleidesulfovibrio alaskensis (strain ATCC BAA-1058 / DSM 17464 / G20) (Desulfovibrio alaskensis) protein is Shikimate kinase.